The primary structure comprises 284 residues: Pseudouridine-5'-phosphate glycosidase (284 aa).

Glutamate 17 acts as the Proton donor in catalysis. Lysine 77 and valine 97 together coordinate substrate. Aspartate 126 contacts Mn(2+). 128-130 (SQD) contacts substrate. The active-site Nucleophile is the lysine 147.

It belongs to the pseudouridine-5'-phosphate glycosidase family. In terms of assembly, homotrimer. Requires Mn(2+) as cofactor.

The enzyme catalyses D-ribose 5-phosphate + uracil = psi-UMP + H2O. Its function is as follows. Catalyzes the reversible cleavage of pseudouridine 5'-phosphate (PsiMP) to ribose 5-phosphate and uracil. Functions biologically in the cleavage direction, as part of a pseudouridine degradation pathway. In Thermotoga petrophila (strain ATCC BAA-488 / DSM 13995 / JCM 10881 / RKU-1), this protein is Pseudouridine-5'-phosphate glycosidase.